We begin with the raw amino-acid sequence, 612 residues long: Apoptosis-inducing factor 1, mitochondrial (612 aa).

2 consecutive short sequence motifs (mitochondrial localization signal) follow at residues 1–30 (MFRCGGLAGAFKQKLVPLVRTVYVQRPKQR) and 62–88 (KMDNSVLVLIVGLSTIGAGAYAYKTIK). A mitochondrion-targeting transit peptide spans 1 to 54 (MFRCGGLAGAFKQKLVPLVRTVYVQRPKQRNRLPGNLFQQWRVPLELQMARQMA). A propeptide spans 55-101 (SSGSSGGKMDNSVLVLIVGLSTIGAGAYAYKTIKEDQKRYNERVMGL) (removed in mature form). Lys-108 carries the post-translational modification N6-succinyllysine. Ser-115 carries the phosphoserine modification. Residues 133-482 (FLLIGGGTAA…KPYWHQSMFW (350 aa)) form an FAD-dependent oxidoreductase region. FAD contacts are provided by residues 137–141 (GGGTA), 163–164 (ED), Arg-171, and Lys-176. An NAD(+)-binding site is contributed by Trp-195. Residue Val-232 coordinates FAD. A Glycyl lysine isopeptide (Lys-Gly) (interchain with G-Cter in ubiquitin) cross-link involves residue Lys-254. At Ser-267 the chain carries Phosphoserine. Arg-284 contacts FAD. Residues 307–310 (GGFL), Glu-335, and Lys-341 each bind NAD(+). Residue Ser-370 is modified to Phosphoserine. Lys-387 is subject to N6-acetyllysine. Gly-398 serves as a coordination point for NAD(+). Asp-437 lines the FAD pocket. A Nuclear localization signal motif is present at residues 445–450 (KLGRRR). NAD(+) is bound by residues 452 to 453 (EH), Trp-482, and Glu-492. Residues 453-454 (HH) and Trp-482 contribute to the FAD site. Residues 512–528 (AQDNPKSATEQSGTGIR) are compositionally biased toward polar residues. The disordered stretch occupies residues 512–551 (AQDNPKSATEQSGTGIRSESETESEASEITIPPSAPAVPQ). Thr-520 carries the phosphothreonine modification. A phosphoserine mark is found at Ser-523 and Ser-529. An NAD(+)-binding site is contributed by Asn-582. The residue at position 592 (Lys-592) is an N6-acetyllysine.

This sequence belongs to the FAD-dependent oxidoreductase family. In terms of assembly, monomer (oxidized form). Homodimer (reduced form). Upon reduction with NADH, undergoes dimerization and forms tight, long-lived FADH2-NAD charge transfer complexes (CTC) resistant to oxidation. Also dimerizes with isoform 3 preventing its release from mitochondria. Interacts with XIAP/BIRC4. Interacts (via N-terminus) with EIF3G (via C-terminus). Interacts with PRELID1. Interacts with CHCHD4; the interaction increases in presence of NADH. Interacts with processed form of PARP1 (Poly [ADP-ribose] polymerase 1, processed C-terminus); interaction is mediated with poly-ADP-ribose chains attached to PARP1, promoting translocation into the nucleus. FAD is required as a cofactor. In terms of processing, under normal conditions, a 54-residue N-terminal segment is first proteolytically removed during or just after translocation into the mitochondrial intermembrane space (IMS) by the mitochondrial processing peptidase (MPP) to form the inner-membrane-anchored mature form (AIFmit). During apoptosis, it is further proteolytically processed at amino-acid position 101 leading to the generation of the mature form, which is confined to the mitochondrial IMS in a soluble form (AIFsol). AIFsol is released to the cytoplasm in response to specific death signals, and translocated to the nucleus, where it induces nuclear apoptosis in a caspase-independent manner. Post-translationally, ubiquitination by XIAP/BIRC4 does not lead to proteasomal degradation. Ubiquitination at Lys-254 by XIAP/BIRC4 blocks its ability to bind DNA and induce chromatin degradation, thereby inhibiting its ability to induce cell death. In terms of tissue distribution, expressed in cortical neurons (at protein level). Expressed in liver (at protein level).

The protein resides in the mitochondrion intermembrane space. The protein localises to the mitochondrion inner membrane. Its subcellular location is the cytoplasm. It is found in the nucleus. It localises to the perinuclear region. The protein resides in the mitochondrion. The protein localises to the cytosol. The enzyme catalyses A + NADH + H(+) = AH2 + NAD(+). Functionally, functions both as NADH oxidoreductase and as regulator of apoptosis. In response to apoptotic stimuli, it is released from the mitochondrion intermembrane space into the cytosol and to the nucleus, where it functions as a proapoptotic factor in a caspase-independent pathway. Release into the cytoplasm is mediated upon binding to poly-ADP-ribose chains. The soluble form (AIFsol) found in the nucleus induces 'parthanatos' i.e. caspase-independent fragmentation of chromosomal DNA. Binds to DNA in a sequence-independent manner. Interacts with EIF3G, and thereby inhibits the EIF3 machinery and protein synthesis, and activates caspase-7 to amplify apoptosis. Plays a critical role in caspase-independent, pyknotic cell death in hydrogen peroxide-exposed cells. In contrast, participates in normal mitochondrial metabolism. Plays an important role in the regulation of respiratory chain biogenesis by interacting with CHCHD4 and controlling CHCHD4 mitochondrial import. The protein is Apoptosis-inducing factor 1, mitochondrial of Mus musculus (Mouse).